The chain runs to 98 residues: Ig heavy chain V region 6.96 (98 aa).

An Ig-like domain is found at 1–98 (EVQLVESGGG…EDTAMYYCAR (98 aa)).

This chain is Ig heavy chain V region 6.96, found in Mus musculus (Mouse).